A 185-amino-acid polypeptide reads, in one-letter code: Translation initiation factor IF-3 (185 aa).

The protein belongs to the IF-3 family. Monomer.

The protein resides in the cytoplasm. Its function is as follows. IF-3 binds to the 30S ribosomal subunit and shifts the equilibrium between 70S ribosomes and their 50S and 30S subunits in favor of the free subunits, thus enhancing the availability of 30S subunits on which protein synthesis initiation begins. The protein is Translation initiation factor IF-3 of Streptococcus pneumoniae (strain Hungary19A-6).